We begin with the raw amino-acid sequence, 521 residues long: Lipid-translocating exporter-like protein RTA1 (521 aa).

7 helical membrane-spanning segments follow: residues 186-206 (GAPIFFTIAFAISTILHSWQC), 211-231 (AWKLIWLQPACAALFTLGYAL), 249-269 (LALFILSQICIYLGPPLLELA), 292-312 (VTAFFGGLMAIVEGLSGSGVS), 332-352 (LVALALQVCVIFIFVYLSVLF), 371-391 (TLMTLYLSMALIFIRCVFRLV), and 418-438 (EAYFYAFEASLMLINSFLWNV). Residues 493-521 (THSQPQELYENPNGNGHKKFRLGNGGRAT) are disordered.

It belongs to the lipid-translocating exporter (LTE) (TC 9.A.26.1) family.

It localises to the membrane. Its function is as follows. Lipid-translocating exporter-like protein; part of the gene cluster that mediates the biosynthesis of phomenoic acid, a long chain aliphatic carboxylic acid that does not appear to be essential for pathogenicity but may play a role in allowing to outcompete other fungi in the environmental niche via its antifungal properties. In Leptosphaeria maculans (strain JN3 / isolate v23.1.3 / race Av1-4-5-6-7-8) (Blackleg fungus), this protein is Lipid-translocating exporter-like protein RTA1.